Here is a 203-residue protein sequence, read N- to C-terminus: Transcriptional regulator GfcR 2 (203 aa).

This sequence belongs to the purine/pyrimidine phosphoribosyltransferase family. GfcR subfamily.

In Methanosarcina acetivorans (strain ATCC 35395 / DSM 2834 / JCM 12185 / C2A), this protein is Transcriptional regulator GfcR 2.